Reading from the N-terminus, the 89-residue chain is Small ribosomal subunit protein uS15 (89 aa).

The protein belongs to the universal ribosomal protein uS15 family. In terms of assembly, part of the 30S ribosomal subunit. Forms a bridge to the 50S subunit in the 70S ribosome, contacting the 23S rRNA.

One of the primary rRNA binding proteins, it binds directly to 16S rRNA where it helps nucleate assembly of the platform of the 30S subunit by binding and bridging several RNA helices of the 16S rRNA. Functionally, forms an intersubunit bridge (bridge B4) with the 23S rRNA of the 50S subunit in the ribosome. The sequence is that of Small ribosomal subunit protein uS15 from Prochlorococcus marinus (strain MIT 9215).